We begin with the raw amino-acid sequence, 246 residues long: Homeobox protein Hox-B4a (246 aa).

Residues 23–125 (YSQSDYLPSH…SQNTSTVSSR (103 aa)) form a disordered region. Polar residues-rich tracts occupy residues 39–48 (AQRQDPSFQH) and 112–123 (QTPTSQNTSTVS). The Antp-type hexapeptide motif lies at 130-135 (VYPWMK). Positions 151 to 210 (PKRSRTAYTRQQVLELEKEFHYNRYLTRRRRVEIAHTLCLSERQIKIWFQNRRMKWKKDH) form a DNA-binding region, homeobox. Residues 210 to 246 (HKLPNTKIRSNSASTNSSGCPTLCSNQSRASGPPPSL) are disordered. A compositionally biased stretch (polar residues) spans 216 to 239 (KIRSNSASTNSSGCPTLCSNQSRA).

It belongs to the Antp homeobox family. Deformed subfamily.

The protein localises to the nucleus. Functionally, sequence-specific transcription factor which is part of a developmental regulatory system that provides cells with specific positional identities on the anterior-posterior axis. The chain is Homeobox protein Hox-B4a (hoxb4a) from Danio rerio (Zebrafish).